Here is a 630-residue protein sequence, read N- to C-terminus: Sodium-dependent serotonin transporter (630 aa).

Polar residues-rich tracts occupy residues 1–11 (METTPLNSQKV) and 42–55 (QISN…STSA). The segment at 1–63 (METTPLNSQK…SAGDEAPHST (63 aa)) is disordered. Over 1–87 (METTPLNSQK…ERETWGKKMD (87 aa)) the chain is Cytoplasmic. Tyrosine 47 is modified (phosphotyrosine). A helical transmembrane segment spans residues 88 to 112 (FLLSVIGYAVDLGNIWRFPYICYQN). Positions 94, 96, 97, 98, and 101 each coordinate Na(+). Aspartate 98 lines the serotonin pocket. Topologically, residues 113-115 (GGG) are extracellular. A helical membrane pass occupies residues 116 to 135 (AFLLPYTIMAIFGGIPLFYM). The Cytoplasmic portion of the chain corresponds to 136–160 (ELALGQYHRNGCISIWKKICPIFKG). Tyrosine 142 carries the post-translational modification Phosphotyrosine. A helical transmembrane segment spans residues 161–186 (IGYAICIIAFYIASYYNTIIAWALYY). Over 187–252 (LISSFTDQLP…KGLQDLGTIS (66 aa)) the chain is Extracellular. Cysteine 200 and cysteine 209 are disulfide-bonded. N-linked (GlcNAc...) asparagine glycans are attached at residues asparagine 208 and asparagine 217. Residues 253 to 271 (WQLALCIMLIFTIIYFSIW) traverse the membrane as a helical segment. Over 272–277 (KGVKTS) the chain is Cytoplasmic. The residue at position 276 (threonine 276) is a Phosphothreonine. The helical transmembrane segment at 278-297 (GKVVWVTATFPYIVLSVLLV) threads the bilayer. Residues 298–324 (RGATLPGAWRGVVFYLKPNWQKLLETG) lie on the Extracellular side of the membrane. Residues 325–347 (VWVDAAAQIFFSLGPGFGVLLAF) form a helical membrane-spanning segment. Position 336 (serine 336) interacts with Na(+). Residues 348–360 (ASYNKFNNNCYQD) lie on the Cytoplasmic side of the membrane. The helical transmembrane segment at 361–380 (ALVTSVVNCMTSFVSGFVIF) threads the bilayer. Asparagine 368 contributes to the Na(+) binding site. Topologically, residues 381–421 (TVLGYMAEMRNEDVSEVAKDAGPSLLFITYAEAIANMPAST) are extracellular. Residues 422 to 443 (FFAIIFFLMLITLGLDSTFAGL) traverse the membrane as a helical segment. Na(+)-binding residues include leucine 434, aspartate 437, and serine 438. Threonine 439 is a binding site for serotonin. Over 444–463 (EGVITAVLDEFPHIWAKRRE) the chain is Cytoplasmic. The chain crosses the membrane as a helical span at residues 464–483 (WFVLIVVITCILGSLLTLTS). Over 484–494 (GGAYVVTLLEE) the chain is Extracellular. Positions 494 and 495 each coordinate serotonin. The chain crosses the membrane as a helical span at residues 495-516 (YATGPAVLTVALIEAVVVSWFY). Over 517 to 538 (GITQFCSDVKEMLGFSPGWFWR) the chain is Cytoplasmic. A helical transmembrane segment spans residues 539–558 (ICWVAISPLFLLFIICSFLM). Serotonin contacts are provided by phenylalanine 556 and serine 559. The Extracellular segment spans residues 559–574 (SPPQLRLFQYNYPHWS). A helical transmembrane segment spans residues 575 to 595 (IILGYCIGTSSVICIPIYIIY). At 596–630 (RLISTPGTLKERIIKSITPETPTEIPCGDIRMNAV) the chain is on the cytoplasmic side. An interaction with RAB4A region spans residues 616–624 (TPTEIPCGD).

Belongs to the sodium:neurotransmitter symporter (SNF) (TC 2.A.22) family. SLC6A4 subfamily. In terms of assembly, monomer or homooligomer. Interacts (via C-terminus) with SCAMP2; the interaction is direct and retains transporter molecules intracellularly. Interacts with filamentous actin and STX1A. Interacts (via the N-terminus) with STX1A (via the H3 domain); this interaction regulates SLC4A6 channel conductance. Interacts with SEC23A, SEC24C and PATJ. Interacts with NOS1; the interaction may diminish the cell surface localization of SERT in the brain and, correspondingly, reduce serotonin reuptake. Interacts with TGFB1I1. Interacts with ITGAV:ITGB3. Interacts (via C-terminus) with ITGB3; this interaction regulates SLC6A4 trafficking. In terms of processing, phosphorylation at Thr-276 increases 5-HT uptake and is required for cGMP-mediated SERT regulation. Expressed in the lung, midbrain and brainstem regions. Expressed in brainstem raphe neurons.

The protein localises to the cell membrane. Its subcellular location is the endomembrane system. The protein resides in the endosome membrane. It localises to the synapse. It is found in the cell junction. The protein localises to the focal adhesion. Its subcellular location is the cell projection. The protein resides in the neuron projection. It carries out the reaction serotonin(out) + K(+)(in) + Na(+)(out) + H(+)(in) = serotonin(in) + K(+)(out) + Na(+)(in) + H(+)(out). Its function is as follows. Serotonin transporter that cotransports serotonin with one Na(+) ion in exchange for one K(+) ion and possibly one proton in an overall electroneutral transport cycle. Transports serotonin across the plasma membrane from the extracellular compartment to the cytosol thus limiting serotonin intercellular signaling. Essential for serotonin homeostasis in the central nervous system. In the developing somatosensory cortex, acts in glutamatergic neurons to control serotonin uptake and its trophic functions accounting for proper spatial organization of cortical neurons and elaboration of sensory circuits. In the mature cortex, acts primarily in brainstem raphe neurons to mediate serotonin uptake from the synaptic cleft back into the pre-synaptic terminal thus terminating serotonin signaling at the synapse. Modulates mucosal serotonin levels in the gastrointestinal tract through uptake and clearance of serotonin in enterocytes. Required for enteric neurogenesis and gastrointestinal reflexes. Regulates blood serotonin levels by ensuring rapid high affinity uptake of serotonin from plasma to platelets, where it is further stored in dense granules via vesicular monoamine transporters and then released upon stimulation. Mechanistically, the transport cycle starts with an outward-open conformation having Na1(+) and Cl(-) sites occupied. The binding of a second extracellular Na2(+) ion and serotonin substrate leads to structural changes to outward-occluded to inward-occluded to inward-open, where the Na2(+) ion and serotonin are released into the cytosol. Binding of intracellular K(+) ion induces conformational transitions to inward-occluded to outward-open and completes the cycle by releasing K(+) possibly together with a proton bound to Asp-98 into the extracellular compartment. Na1(+) and Cl(-) ions remain bound throughout the transport cycle. Additionally, displays serotonin-induced channel-like conductance for monovalent cations, mainly Na(+) ions. The channel activity is uncoupled from the transport cycle and may contribute to the membrane resting potential or excitability. This Mus musculus (Mouse) protein is Sodium-dependent serotonin transporter.